The following is a 499-amino-acid chain: Calcium/calmodulin-dependent protein kinase type II subunit delta (499 aa).

Ala2 carries the post-translational modification N-acetylalanine. The 259-residue stretch at 14 to 272 (YQLFEELGKG…ASEALKHPWI (259 aa)) folds into the Protein kinase domain. Residues 20–28 (LGKGAFSVV) and Lys43 contribute to the ATP site. Catalysis depends on Asp136, which acts as the Proton acceptor. An autoinhibitory domain region spans residues 283-292 (HRQETVDCLK). Thr287 is modified (phosphothreonine; by autocatalysis). The segment at 291 to 301 (LKKFNARRKLK) is calmodulin-binding. Phosphothreonine; by autocatalysis is present on residues Thr306 and Thr307. Ser315 carries the post-translational modification Phosphoserine. An N6-acetyllysine modification is found at Lys318. 2 positions are modified to phosphoserine: Ser319 and Ser330. Phosphothreonine is present on Thr331. Ser333 is subject to Phosphoserine. Thr336 and Thr337 each carry phosphothreonine. Residues Ser404, Ser490, and Ser494 each carry the phosphoserine modification.

The protein belongs to the protein kinase superfamily. CAMK Ser/Thr protein kinase family. CaMK subfamily. As to quaternary structure, CAMK2 is composed of 4 different chains: alpha (CAMK2A), beta (CAMK2B), gamma (CAMK2G), and delta (CAMK2D). The different isoforms assemble into homo- or heteromultimeric holoenzymes composed of 12 subunits with two hexameric rings stacked one on top of the other. Interacts with RRAD CACNB2. In terms of processing, autophosphorylation of Thr-287 following activation by Ca(2+)/calmodulin. Phosphorylation of Thr-287 locks the kinase into an activated state.

Its subcellular location is the cell membrane. The protein resides in the sarcolemma. It is found in the sarcoplasmic reticulum membrane. The catalysed reaction is L-seryl-[protein] + ATP = O-phospho-L-seryl-[protein] + ADP + H(+). It carries out the reaction L-threonyl-[protein] + ATP = O-phospho-L-threonyl-[protein] + ADP + H(+). Activated by Ca(2+)/calmodulin. Binding of calmodulin results in conformational change that relieves intrasteric autoinhibition and allows autophosphorylation of Thr-287 which turns the kinase in a constitutively active form and confers to the kinase a Ca(2+)-independent activity. Its function is as follows. Calcium/calmodulin-dependent protein kinase involved in the regulation of Ca(2+) homeostatis and excitation-contraction coupling (ECC) in heart by targeting ion channels, transporters and accessory proteins involved in Ca(2+) influx into the myocyte, Ca(2+) release from the sarcoplasmic reticulum (SR), SR Ca(2+) uptake and Na(+) and K(+) channel transport. Targets also transcription factors and signaling molecules to regulate heart function. In its activated form, is involved in the pathogenesis of dilated cardiomyopathy and heart failure. Contributes to cardiac decompensation and heart failure by regulating SR Ca(2+) release via direct phosphorylation of RYR2 Ca(2+) channel on 'Ser-2808'. In the nucleus, phosphorylates the MEF2 repressor HDAC4, promoting its nuclear export and binding to 14-3-3 protein, and expression of MEF2 and genes involved in the hypertrophic program. Is essential for left ventricular remodeling responses to myocardial infarction. In pathological myocardial remodeling acts downstream of the beta adrenergic receptor signaling cascade to regulate key proteins involved in ECC. Regulates Ca(2+) influx to myocytes by binding and phosphorylating the L-type Ca(2+) channel subunit beta-2 CACNB2. In addition to Ca(2+) channels, can target and regulate the cardiac sarcolemmal Na(+) channel Nav1.5/SCN5A and the K+ channel Kv4.3/KCND3, which contribute to arrhythmogenesis in heart failure. Phosphorylates phospholamban (PLN/PLB), an endogenous inhibitor of SERCA2A/ATP2A2, contributing to the enhancement of SR Ca(2+) uptake that may be important in frequency-dependent acceleration of relaxation (FDAR) and maintenance of contractile function during acidosis. May participate in the modulation of skeletal muscle function in response to exercise, by regulating SR Ca(2+) transport through phosphorylation of PLN/PLB and triadin, a ryanodine receptor-coupling factor. In response to interferon-gamma (IFN-gamma) stimulation, catalyzes phosphorylation of STAT1, stimulating the JAK-STAT signaling pathway. This Sus scrofa (Pig) protein is Calcium/calmodulin-dependent protein kinase type II subunit delta (CAMK2D).